The following is a 366-amino-acid chain: Inositol 2-dehydrogenase (366 aa).

The protein belongs to the Gfo/Idh/MocA family. In terms of assembly, homotetramer.

It carries out the reaction myo-inositol + NAD(+) = scyllo-inosose + NADH + H(+). In terms of biological role, involved in the oxidation of myo-inositol (MI) to 2-keto-myo-inositol (2KMI or 2-inosose). This Rhodococcus jostii (strain RHA1) protein is Inositol 2-dehydrogenase.